We begin with the raw amino-acid sequence, 176 residues long: NAD(P)H-quinone oxidoreductase subunit 6, chloroplastic (176 aa).

5 consecutive transmembrane segments (helical) span residues 10 to 30, 33 to 53, 60 to 80, 95 to 115, and 152 to 172; these read ILMLFGGFVLLLGGLGVVLLT, IYSAFSLGLVLVCISLFYFLL, VAQLLIYVGAINVLIIFAVMF, IGDGFTSLVCITIVFSLMTTI, and FYLPFELISIILLVSLIGAIT.

It belongs to the complex I subunit 6 family. NDH is composed of at least 16 different subunits, 5 of which are encoded in the nucleus.

Its subcellular location is the plastid. The protein localises to the chloroplast thylakoid membrane. It catalyses the reaction a plastoquinone + NADH + (n+1) H(+)(in) = a plastoquinol + NAD(+) + n H(+)(out). The enzyme catalyses a plastoquinone + NADPH + (n+1) H(+)(in) = a plastoquinol + NADP(+) + n H(+)(out). NDH shuttles electrons from NAD(P)H:plastoquinone, via FMN and iron-sulfur (Fe-S) centers, to quinones in the photosynthetic chain and possibly in a chloroplast respiratory chain. The immediate electron acceptor for the enzyme in this species is believed to be plastoquinone. Couples the redox reaction to proton translocation, and thus conserves the redox energy in a proton gradient. The polypeptide is NAD(P)H-quinone oxidoreductase subunit 6, chloroplastic (ndhG) (Triticum aestivum (Wheat)).